We begin with the raw amino-acid sequence, 255 residues long: Myb-related protein Zm38 (255 aa).

HTH myb-type domains follow at residues 9–61 and 62–116; these read KAHT…INYL and RPDL…RRKL. 2 consecutive DNA-binding regions (H-T-H motif) follow at residues 37–61 and 89–112; these read WRSLPKAAGLLRCGKSCRLRWINYL and WSLIAARLPGRTDNEIKNYWNTHV.

It is found in the nucleus. Its function is as follows. Transcription factor that negatively regulates genes involved in anthocyanin biosynthesis. This Zea mays (Maize) protein is Myb-related protein Zm38.